A 202-amino-acid polypeptide reads, in one-letter code: tRNA (pseudouridine(54)-N(1))-methyltransferase (202 aa).

Residues leucine 134 and glycine 155 each coordinate S-adenosyl-L-methionine.

This sequence belongs to the methyltransferase superfamily. TrmY family. As to quaternary structure, homodimer.

The protein resides in the cytoplasm. The catalysed reaction is pseudouridine(54) in tRNA + S-adenosyl-L-methionine = N(1)-methylpseudouridine(54) in tRNA + S-adenosyl-L-homocysteine + H(+). Its function is as follows. Specifically catalyzes the N1-methylation of pseudouridine at position 54 (Psi54) in tRNAs. The polypeptide is tRNA (pseudouridine(54)-N(1))-methyltransferase (Thermococcus gammatolerans (strain DSM 15229 / JCM 11827 / EJ3)).